A 343-amino-acid chain; its full sequence is GTPase Obg (343 aa).

An Obg domain is found at 2-160 (EKFVDRVKIF…RWIILELKLI (159 aa)). Residues 161–332 (ADVGLVGFPN…LKEGLWKKYE (172 aa)) enclose the OBG-type G domain. GTP contacts are provided by residues 167-174 (GFPNAGKS), 192-196 (FTTLS), 214-217 (DIPG), 284-287 (NKID), and 313-315 (SAL). Positions 174 and 194 each coordinate Mg(2+).

This sequence belongs to the TRAFAC class OBG-HflX-like GTPase superfamily. OBG GTPase family. As to quaternary structure, monomer. Mg(2+) is required as a cofactor.

Its subcellular location is the cytoplasm. Its function is as follows. An essential GTPase which binds GTP, GDP and possibly (p)ppGpp with moderate affinity, with high nucleotide exchange rates and a fairly low GTP hydrolysis rate. Plays a role in control of the cell cycle, stress response, ribosome biogenesis and in those bacteria that undergo differentiation, in morphogenesis control. This is GTPase Obg from Aquifex aeolicus (strain VF5).